The chain runs to 344 residues: Alkyl hydroperoxide reductase Rv2159c (344 aa).

Residues 49–50 (AG) are important for interaction with PknI. Cys-84 serves as the catalytic Cysteine sulfenic acid (-SOH) intermediate.

It belongs to the AhpD family. Interacts with the serine/threonine-protein kinase PknI. The PknI-Rv2159c interaction is mediated through phosphorylation independent physical interaction.

Interaction with PknI increases the peroxidase activity by several folds. Its function is as follows. Involved in protection against oxidative stresses. May play a significant role in maintaining the cellular homeostasis during stress and virulence of M.tuberculosis. In vitro, catalyzes the decomposition of cumene hydroperoxide (CHP) to acetophenone. The polypeptide is Alkyl hydroperoxide reductase Rv2159c (Mycobacterium tuberculosis (strain ATCC 25618 / H37Rv)).